We begin with the raw amino-acid sequence, 204 residues long: Small ribosomal subunit protein uS4 (204 aa).

The disordered stretch occupies residues 1 to 46 (MSKRHSSKYKIDRRMGENIWGRPKSPVNRREYGPGQHGQRRRSKIS). An S4 RNA-binding domain is found at 94 to 157 (RRLDMIVYRA…QEMALVLEAQ (64 aa)).

The protein belongs to the universal ribosomal protein uS4 family. In terms of assembly, part of the 30S ribosomal subunit. Contacts protein S5. The interaction surface between S4 and S5 is involved in control of translational fidelity.

Its function is as follows. One of the primary rRNA binding proteins, it binds directly to 16S rRNA where it nucleates assembly of the body of the 30S subunit. With S5 and S12 plays an important role in translational accuracy. The polypeptide is Small ribosomal subunit protein uS4 (Zymomonas mobilis subsp. mobilis (strain ATCC 31821 / ZM4 / CP4)).